The sequence spans 107 residues: Death-associated protein-like 1 (107 aa).

The disordered stretch occupies residues 1–23 (MANEVQDLLSPRKGGHPPAVKAG).

Expressed in hair follicle (at protein level).

May play a role in the early stages of epithelial differentiation or in apoptosis. The protein is Death-associated protein-like 1 (DAPL1) of Homo sapiens (Human).